The chain runs to 660 residues: Putative ABC transporter ATP-binding MG390 homolog (660 aa).

Positions glutamine 6 to valine 126 constitute a Peptidase C39 domain. Cysteine 12 is an active-site residue. The next 6 helical transmembrane spans lie at leucine 150–threonine 170, isoleucine 188–leucine 208, histidine 265–isoleucine 285, phenylalanine 290–phenylalanine 310, serine 379–glutamate 399, and tyrosine 402–threonine 422. Positions isoleucine 464–threonine 660 constitute an ABC transporter domain. Position 494–501 (glycine 494–serine 501) interacts with ATP.

The protein belongs to the ABC transporter superfamily.

It is found in the cell membrane. This chain is Putative ABC transporter ATP-binding MG390 homolog, found in Mycoplasma pneumoniae (strain ATCC 29342 / M129 / Subtype 1) (Mycoplasmoides pneumoniae).